The sequence spans 305 residues: MLPRLGGPALPLLLPSLLLLLLLGAGGCGPGVRAEVLFRCPPCTPERLAACGPPPDAPCAELVREPGCGCCSVCARQEGEACGVYIPRCAQTLRCYPNPGSELPLKALVTGAGTCEKRRVGTTPQQVADSDDDHSEGGLVENHVDGTMNMLGGGSSAGRKPLKSGMKELAVFREKVNEQHRQMGKGAKHLSLEEPKKLRPPPARTPCQQELDQVLERISTMRLPDDRGPLEHLYSLHIPNCDKHGRYNLKQCKMSLNGQRGECWCVNPNTGKPIQGAPTIRGDPECHLFYNEQQETGGAHAQSVQ.

A signal peptide spans 1 to 34 (MLPRLGGPALPLLLPSLLLLLLLGAGGCGPGVRA). In terms of domain architecture, IGFBP N-terminal spans 36 to 118 (VLFRCPPCTP…VTGAGTCEKR (83 aa)). Intrachain disulfides connect C40–C68, C43–C70, C51–C71, C59–C74, C82–C95, C89–C115, C207–C241, C252–C263, and C265–C286. A Thyroglobulin type-1 domain is found at 204 to 286 (RTPCQQELDQ…APTIRGDPEC (83 aa)). Positions 281–283 (RGD) match the Cell attachment site motif.

As to quaternary structure, interacts with IGF1. Interacts with IGF2. Interacts (via RGD motif) with integrin alpha5/ITGA5; this interaction induces cell migration, adhesion or apoptosis according to the context. Interacts with PTPRB; this interaction leads to PTPRB dimerization and inactivation. Post-translationally, cleaved by MMP9 leading to release of free IGF2 from IGFBP2-IGF2 complex, which contributes to enhance the motility and the growth of astrocytes. In terms of processing, O-glycosylated. As to expression, highly expressed in adult liver, but also in kidney, lung, brain, spleen, testis and ovary.

It localises to the secreted. In terms of biological role, multifunctional protein that plays a critical role in regulating the availability of IGFs such as IGF1 and IGF2 to their receptors and thereby regulates IGF-mediated cellular processes including proliferation, differentiation, and apoptosis in a cell-type specific manner. Functions coordinately with receptor protein tyrosine phosphatase beta/PTPRB and the IGF1 receptor to regulate IGF1-mediated signaling by stimulating the phosphorylation of PTEN leading to its inactivation and AKT1 activation. Plays a positive role in cell migration via interaction with integrin alpha5/ITGA5 through an RGD motif. Additionally, interaction with ITGA5/ITGB1 enhances the adhesion of endothelial progenitor cells to endothelial cells. Upon mitochondrial damage, facilitates apoptosis with ITGA5 of podocytes, and then activates the phosphorylation of focal adhesion kinase (FAK)-mediated mitochondrial injury. The chain is Insulin-like growth factor-binding protein 2 (Igfbp2) from Mus musculus (Mouse).